Consider the following 445-residue polypeptide: Phosphoglucosamine mutase (445 aa).

S100 functions as the Phosphoserine intermediate in the catalytic mechanism. Positions 100, 240, 242, and 244 each coordinate Mg(2+). A Phosphoserine modification is found at S100.

Belongs to the phosphohexose mutase family. Mg(2+) is required as a cofactor. Activated by phosphorylation.

It carries out the reaction alpha-D-glucosamine 1-phosphate = D-glucosamine 6-phosphate. In terms of biological role, catalyzes the conversion of glucosamine-6-phosphate to glucosamine-1-phosphate. This is Phosphoglucosamine mutase from Pelotomaculum thermopropionicum (strain DSM 13744 / JCM 10971 / SI).